The chain runs to 24 residues: Major pollen allergen Ole e 4 (24 aa).

The protein belongs to the glycosyl hydrolase 17 family. In terms of processing, the N-terminus is blocked.

The sequence is that of Major pollen allergen Ole e 4 from Olea europaea (Common olive).